The sequence spans 259 residues: Putative carbamate hydrolase RutD (259 aa).

This sequence belongs to the AB hydrolase superfamily. Hydrolase RutD family.

The catalysed reaction is carbamate + 2 H(+) = NH4(+) + CO2. Its function is as follows. Involved in pyrimidine catabolism. May facilitate the hydrolysis of carbamate, a reaction that can also occur spontaneously. The protein is Putative carbamate hydrolase RutD of Pseudomonas syringae pv. syringae (strain B728a).